We begin with the raw amino-acid sequence, 603 residues long: Palladin (603 aa).

Positions 63 to 67 (FPPPP) are interaction with VASP. Position 133 is a phosphoserine (serine 133). A disordered region spans residues 134–156 (PPTPAALLSPTKEPPPLLAKPKL). Threonine 136 bears the Phosphothreonine mark. 4 positions are modified to phosphoserine: serine 142, serine 170, serine 256, and serine 261. One can recognise an Ig-like C2-type 1 domain in the interval 278-362 (PFFEMKLKHY…MAANTQGRVS (85 aa)). The segment at 373–402 (NQRGRSPRSPPGHPHARRPRSRSRDSGDEN) is disordered. 3 positions are modified to phosphoserine: serine 378, serine 381, and serine 393. Position 395 is a phosphoserine; by PKB/AKT1 (serine 395). The residue at position 398 (serine 398) is a Phosphoserine. 2 consecutive Ig-like C2-type domains span residues 412-503 (PHFL…LVVA) and 511-601 (PVFI…ARLD). Interaction with EZR regions lie at residues 414–503 (FLQA…LVVA) and 513–603 (FIEK…LDVY). Cysteine 433 and cysteine 485 are joined by a disulfide.

It belongs to the myotilin/palladin family. Interacts with EPS8. Interacts with LASP1. Interacts with VASP. Interacts with ACTN. Interacts with SORBS2. Interacts with PFN1. Interacts with LPP. Interacts with SPIN90. Interacts with SRC. Interacts with EZR. Interacts with RAI14. In terms of processing, phosphorylated predominantly on serines and, to a lesser extent, on tyrosines. Phosphorylation at Ser-395 by PKB/AKT1 modulates cytoskeletal organization and cell motility. As to expression, in adult central nervous system is detected in the brain and spinal cord, specially in the olfactory bulb, cerebral and cerebellar cortices, hippocampus, amygdala, superior colluculus, and superficial laminae of the spinal dorsal horn.

The protein resides in the cytoplasm. The protein localises to the cytoskeleton. It localises to the cell junction. It is found in the focal adhesion. Its subcellular location is the myofibril. The protein resides in the sarcomere. The protein localises to the z line. It localises to the cell projection. It is found in the ruffle. Its subcellular location is the podosome. The protein resides in the lamellipodium. The protein localises to the axon. It localises to the growth cone. Cytoskeletal protein required for organization of normal actin cytoskeleton. Roles in establishing cell morphology, motility, cell adhesion and cell-extracellular matrix interactions in a variety of cell types. May function as a scaffolding molecule with the potential to influence both actin polymerization and the assembly of existing actin filaments into higher-order arrays. Binds to proteins that bind to either monomeric or filamentous actin. Localizes at sites where active actin remodeling takes place, such as lamellipodia and membrane ruffles. Different isoforms may have functional differences. Plays a role in neurite outgrowth and in the establishment of polarity during neuronal morphogenesis. Participates in the acquisition of the reactive astrocyte morphology. This is Palladin (Palld) from Rattus norvegicus (Rat).